Here is a 349-residue protein sequence, read N- to C-terminus: Phosphoribosylformylglycinamidine cyclo-ligase (349 aa).

It belongs to the AIR synthase family.

The protein resides in the cytoplasm. The enzyme catalyses 2-formamido-N(1)-(5-O-phospho-beta-D-ribosyl)acetamidine + ATP = 5-amino-1-(5-phospho-beta-D-ribosyl)imidazole + ADP + phosphate + H(+). Its pathway is purine metabolism; IMP biosynthesis via de novo pathway; 5-amino-1-(5-phospho-D-ribosyl)imidazole from N(2)-formyl-N(1)-(5-phospho-D-ribosyl)glycinamide: step 2/2. In Lactobacillus delbrueckii subsp. bulgaricus (strain ATCC BAA-365 / Lb-18), this protein is Phosphoribosylformylglycinamidine cyclo-ligase.